Consider the following 419-residue polypeptide: Homeobox-containing protein 1 (419 aa).

Positions 18 to 49 constitute an HNF-p1 domain; the sequence is DEPRFTIEQIDLLQRLRRTGMTKHEILHALET. The tract at residues 56-152 is disordered; sequence EHSDKFGRRS…GQRSYSFEAS (97 aa). Lysine 60 is covalently cross-linked (Glycyl lysine isopeptide (Lys-Gly) (interchain with G-Cter in SUMO2)). 2 stretches are compositionally biased toward low complexity: residues 64–73 and 81–93; these read RSSYGGSSYG and ASSS…TQTQ. Over residues 94–132 the composition is skewed to polar residues; sequence HSGMSPSPSNSYDTSPLPCTTNQNGRENNDRLSTSNGKM. Lysine 131 is covalently cross-linked (Glycyl lysine isopeptide (Lys-Gly) (interchain with G-Cter in SUMO2)). The POU-specific atypical domain occupies 145–241; it reads RSYSFEASEE…PGATLSMRPA (97 aa). Residue serine 148 is modified to Phosphoserine. A Glycyl lysine isopeptide (Lys-Gly) (interchain with G-Cter in SUMO2) cross-link involves residue lysine 161. A Phosphoserine modification is found at serine 170. Glycyl lysine isopeptide (Lys-Gly) (interchain with G-Cter in SUMO2) cross-links involve residues lysine 174, lysine 217, and lysine 310. The segment at residues 267–341 is a DNA-binding region (homeobox); that stretch reads RRGSRFTWRK…NRRKEIKRRA (75 aa). The segment at 352-384 is disordered; it reads IDVQSPGGHSNSDDVDGNDYSEQDDSTSHSDHQ. The segment covering 364–376 has biased composition (acidic residues); the sequence is DDVDGNDYSEQDD. Residue lysine 412 forms a Glycyl lysine isopeptide (Lys-Gly) (interchain with G-Cter in SUMO1); alternate linkage. Lysine 412 participates in a covalent cross-link: Glycyl lysine isopeptide (Lys-Gly) (interchain with G-Cter in SUMO2); alternate.

In terms of assembly, associates with the telomerase holoenzyme complex. Interacts with DKC1, XRCC6 and COIL.

It is found in the nucleus. It localises to the cytoplasm. The protein resides in the chromosome. The protein localises to the telomere. Its subcellular location is the cajal body. It is found in the PML body. Functionally, binds directly to 5'-TTAGGG-3' repeats in telomeric DNA. Associates with the telomerase complex at sites of active telomere processing and positively regulates telomere elongation. Important for TERT binding to chromatin, indicating a role in recruitment of the telomerase complex to telomeres. Also plays a role in the alternative lengthening of telomeres (ALT) pathway in telomerase-negative cells where it promotes formation and/or maintenance of ALT-associated promyelocytic leukemia bodies (APBs). Enhances formation of telomere C-circles in ALT cells, suggesting a possible role in telomere recombination. Might also be involved in the DNA damage response at telomeres. This Mus musculus (Mouse) protein is Homeobox-containing protein 1 (Hmbox1).